The primary structure comprises 187 residues: Phospholipase A2-gamma (187 aa).

The first 25 residues, 1–25, serve as a signal peptide directing secretion; that stretch reads MITGLALSRVAFGLTAFLLLAVVSS. 6 disulfides stabilise this stretch: C29/C56, C33/C62, C38/C115, C49/C69, C68/C93, and C75/C86. 3 residues coordinate Ca(2+): Y48, G50, and Y53. H72 is a catalytic residue. D73 serves as a coordination point for Ca(2+).

This sequence belongs to the phospholipase A2 family. It depends on Ca(2+) as a cofactor. In terms of tissue distribution, strongly expressed in mature flowers but weakly expressed in other tissues. Detected in buds, open flowers and in pollen.

It is found in the secreted. The protein resides in the golgi apparatus. The protein localises to the trans-Golgi network. It localises to the endoplasmic reticulum. It carries out the reaction a 1,2-diacyl-sn-glycero-3-phosphocholine + H2O = a 1-acyl-sn-glycero-3-phosphocholine + a fatty acid + H(+). PA2 catalyzes the calcium-dependent hydrolysis of the 2-acyl groups in 3-sn-phosphoglycerides. Releases lysophospholipids (LPLs) and free fatty acids (FFAs) from membrane phospholipids in response to hormones and other external stimuli. Plays a role in pollen development and germination and tube growth. The protein is Phospholipase A2-gamma (PLA2-GAMMA) of Arabidopsis thaliana (Mouse-ear cress).